The following is a 389-amino-acid chain: MASLYLNSLLPLPPSHPQKLLEPSSSSLLSTSNGNELALKPIVINGDPPTFVSAPARRIVAVGDLHGDLGKARDALQLAGVLSSDGRDQWVGQDTVLVQVGDILDRGDDEIAILSLLRSLDDQAKANGGAVFQVNGNHETMNVEGDFRYVDARAFDECTDFLDYLEDYAQDWDKAFRNWIFESRQWKEDRRSSQTYWDQWNVVKRQKGVIARSVLLRPGGRLACELSRHGVILRVNNWLFCHGGLLPHHVAYGIERINREVSTWMRSPTNYEDSPQMPFIATRGYDSVVWSRLYSRETSELEDYQIEQVNKILHDTLEAVGAKAMVVGHTPQLSGVNCEYGCGIWRVDVGMSSGVLDSRPEVLEIRGDKARVIRSNRDRLHELQVADYI.

A chloroplast-targeting transit peptide spans 1–53; that stretch reads MASLYLNSLLPLPPSHPQKLLEPSSSSLLSTSNGNELALKPIVINGDPPTFVS. Asp-64, His-66, Asp-102, and Asn-137 together coordinate Mn(2+). The Proton donor role is filled by His-138. Mn(2+) contacts are provided by His-242 and His-314.

It belongs to the metallophosphoesterase superfamily. SLP family. It depends on Mn(2+) as a cofactor. Expressed in rosettes leaves, shoots and flowers (at protein level).

The protein resides in the plastid. The protein localises to the chloroplast. Functionally, shows phosphatase activity, hydrolyzing the artificial substrate para-nitrophenylphosphate (pNPP) in vitro. In Arabidopsis thaliana (Mouse-ear cress), this protein is Shewanella-like protein phosphatase 1.